A 289-amino-acid polypeptide reads, in one-letter code: Protoheme IX farnesyltransferase 2 (289 aa).

Helical transmembrane passes span 13-33 (LEIT…VPGS), 37-57 (IYDL…ASIF), 86-106 (LFFI…FILL), 109-129 (VTSA…TIIL), 137-157 (IVIG…SITG), 159-179 (VSAT…THFW), 207-227 (EFWI…PLFI), 232-252 (VGLL…YYVA), and 267-287 (AFHF…LILV).

Belongs to the UbiA prenyltransferase family. Protoheme IX farnesyltransferase subfamily.

Its subcellular location is the cell membrane. It catalyses the reaction heme b + (2E,6E)-farnesyl diphosphate + H2O = Fe(II)-heme o + diphosphate. Its pathway is porphyrin-containing compound metabolism; heme O biosynthesis; heme O from protoheme: step 1/1. In terms of biological role, converts heme B (protoheme IX) to heme O by substitution of the vinyl group on carbon 2 of heme B porphyrin ring with a hydroxyethyl farnesyl side group. The polypeptide is Protoheme IX farnesyltransferase 2 (Picrophilus torridus (strain ATCC 700027 / DSM 9790 / JCM 10055 / NBRC 100828 / KAW 2/3)).